We begin with the raw amino-acid sequence, 266 residues long: MARSALLNVMVQAVFKAGKSLARDFGEVQNLQVSLKGPADYVSQADRKAERIIREELMKARPTYGFLGEEGEEIKGTDGAHRWIVDPLDGTTNFLHGIPHFAISVALERQGEIVGAVVFNPATDELYTAERGGGAFLNDRRLRVGARKALSDAVIGTGTPHLGRGNHGKYLVELRHVMGEVAGIRRMGSASLDLAYVAAGRFDGFWERDLAAWDMAAGLLLIREAGGWSTDAEGGGKPLEAGSIVCGNEHIAKALREVIQRPIPSK.

Residues Glu-69, Asp-86, Leu-88, and Asp-89 each contribute to the Mg(2+) site. Glu-69 is a binding site for substrate. Substrate-binding positions include Leu-88 to Thr-91, Arg-185, and Asp-214. Mg(2+) is bound at residue Asp-214.

The protein belongs to the inositol monophosphatase superfamily. It depends on Mg(2+) as a cofactor.

The catalysed reaction is a myo-inositol phosphate + H2O = myo-inositol + phosphate. This Rhizobium meliloti (strain 1021) (Ensifer meliloti) protein is Inositol-1-monophosphatase (suhB).